Here is a 150-residue protein sequence, read N- to C-terminus: Testis-expressed protein 22 (150 aa).

Residues 1–23 show a composition bias toward basic and acidic residues; it reads MDSRKLSPRGKKLESHLSQEHRR. The tract at residues 1-26 is disordered; it reads MDSRKLSPRGKKLESHLSQEHRRPPL.

The protein localises to the cytoplasm. Its subcellular location is the cytoplasmic vesicle. It localises to the secretory vesicle. It is found in the acrosome. This Homo sapiens (Human) protein is Testis-expressed protein 22 (TEX22).